Reading from the N-terminus, the 593-residue chain is Uroporphyrinogen-III C-methyltransferase (593 aa).

Residues 278–303 (ETSSSPNKKTKQETVTEGVVPPTDEN) are disordered.

This sequence belongs to the precorrin methyltransferase family.

The catalysed reaction is uroporphyrinogen III + 2 S-adenosyl-L-methionine = precorrin-2 + 2 S-adenosyl-L-homocysteine + H(+). Its function is as follows. Siroheme synthase involved in methionine biosynthesis. In Saccharomyces cerevisiae (strain ATCC 204508 / S288c) (Baker's yeast), this protein is Uroporphyrinogen-III C-methyltransferase.